Here is a 184-residue protein sequence, read N- to C-terminus: Effector CFEM1 (184 aa).

The signal sequence occupies residues 1 to 17; it reads MKYSVAFVALAAVAAQA. One can recognise a CFEM domain in the interval 18–112; that stretch reads QSLADVPKCA…PTTTAAATST (95 aa). 4 disulfide bridges follow: C26/C68, C30/C63, C41/C48, and C50/C85. Residue D45 coordinates heme. 2 disordered regions span residues 83-106 and 136-163; these read NLCK…PTTT and IIPT…EQAN. Positions 88-103 are enriched in basic and acidic residues; that stretch reads PPKESEAKSTAEEEKP. N163 carries the GPI-anchor amidated asparagine lipid modification. Residues 164-184 constitute a propeptide, removed in mature form; sequence GAAGLKGLGALAMAAFAALAL.

The protein belongs to the RBT5 family. In terms of assembly, interacts with Z.mays LRR5; the interaction is direct. Interacts (via CFEM domain) with Z.mays WAK17 isoform 2; the interaction is direct.

The protein localises to the secreted. It localises to the cell wall. It is found in the cell membrane. Its subcellular location is the cell septum. The protein resides in the cytoplasm. Its function is as follows. Suppresses host programmed cell death during infection by binding to Z.mays WAK17 isoform 2 and Z.mays LRR5, to prevent activation of Z.mays WAK17 isoform 1 and the downstream hypersensitive response. This Gibberella zeae (strain ATCC MYA-4620 / CBS 123657 / FGSC 9075 / NRRL 31084 / PH-1) (Wheat head blight fungus) protein is Effector CFEM1.